The chain runs to 1846 residues: C2 domain-containing protein (1846 aa).

Residues 16–36 (NTEKEEGKNAEINENNDPNTQ) form a disordered region. Basic and acidic residues predominate over residues 17–26 (TEKEEGKNAE). Residues 27-36 (INENNDPNTQ) are compositionally biased toward polar residues. Residues 497-623 (VPRYRQRGDI…FNEKNVRRNK (127 aa)) form the C2 domain. Composition is skewed to basic and acidic residues over residues 1193 to 1211 (DEHTDIDTEKKKHEKDNYK) and 1230 to 1243 (KDDHHHITDKKVSK). Disordered stretches follow at residues 1193 to 1244 (DEHT…VSKS), 1346 to 1370 (KYTINEKRDDIKTKKKRSKEKKKQD), 1456 to 1635 (KNER…KKRV), 1652 to 1692 (NEKM…NNER), and 1827 to 1846 (EEPSSKKSPQKKKIVIVRKN). Positions 1349 to 1506 (INEKRDDIKT…DENMKEEQKM (158 aa)) form a coiled coil. Composition is skewed to basic and acidic residues over residues 1456–1474 (KNERNKMEKSYKRMIQKDK), 1481–1629 (ESRD…MRRE), 1652–1663 (NEKMKKKEEKEE), and 1670–1692 (KEDIEDKYKIGKEASLDENNNER). Basic residues predominate over residues 1834 to 1846 (SPQKKKIVIVRKN).

Its subcellular location is the membrane. Binds calcium and phospholipids. Regulates microneme secretion. This is C2 domain-containing protein from Plasmodium falciparum (isolate 3D7).